Consider the following 1018-residue polypeptide: Importin-9 (1018 aa).

The 80-residue stretch at threonine 35 to aspartate 114 folds into the Importin N-terminal domain. The disordered stretch occupies residues glycine 921–serine 950. A compositionally biased stretch (acidic residues) spans proline 926 to alanine 939.

The protein belongs to the importin beta family.

It is found in the cytoplasm. The protein localises to the nucleus. Functionally, nuclear transport receptor that mediates nuclear import of proteins. Serves as receptor for nuclear localization signals (NLS) in cargo substrates. Is thought to mediate docking of the importin/substrate complex to the nuclear pore complex (NPC) through binding to nucleoporin and the complex is subsequently translocated through the pore by an energy requiring, Ran-dependent mechanism. Mediates the import of pre-assembled proteasomes into the nucleus during the late stages of sperm development. The sequence is that of Importin-9 from Drosophila melanogaster (Fruit fly).